A 188-amino-acid chain; its full sequence is Ion-translocating oxidoreductase complex subunit B (188 aa).

The interval 1-26 is hydrophobic; that stretch reads MNGVFLAIGALLPICLAGGALLGYAA. One can recognise a 4Fe-4S domain in the interval 32 to 90; that stretch reads QGDPVAEQVNALLPQTQCGQCGYPGCKPYAEAIAAGDKINKCPPGGEATIRALADLLDL. [4Fe-4S] cluster-binding residues include Cys49, Cys52, Cys57, Cys73, Cys113, Cys116, Cys119, Cys123, Cys143, Cys146, Cys149, and Cys153. 4Fe-4S ferredoxin-type domains are found at residues 104 to 133 and 134 to 163; these read RVAY…GAAR and LMHT…MREI.

Belongs to the 4Fe4S bacterial-type ferredoxin family. RnfB subfamily. The complex is composed of six subunits: RnfA, RnfB, RnfC, RnfD, RnfE and RnfG. Requires [4Fe-4S] cluster as cofactor.

The protein resides in the cell inner membrane. Part of a membrane-bound complex that couples electron transfer with translocation of ions across the membrane. The chain is Ion-translocating oxidoreductase complex subunit B from Pseudomonas aeruginosa (strain LESB58).